A 142-amino-acid polypeptide reads, in one-letter code: UPF0305 protein MK0666 (142 aa).

This sequence belongs to the UPF0305 family.

The sequence is that of UPF0305 protein MK0666 from Methanopyrus kandleri (strain AV19 / DSM 6324 / JCM 9639 / NBRC 100938).